The sequence spans 102 residues: MTQAFFFLLLVSLVASTLSKEFNFCPRAIDEVCPVKEKRNECCSSKECRFGEMCCSEPCGNVCRVKSDTPLGFPAKEDSNCKVGEIKKKWYQKVWSKITKWG.

Positions 1–19 (MTQAFFFLLLVSLVASTLS) are cleaved as a signal peptide. Residues 20 to 39 (KEFNFCPRAIDEVCPVKEKR) constitute a propeptide that is removed on maturation. W101 is subject to Tryptophan amide.

This sequence belongs to the venom protein 11 family. 02 (wap-2) subfamily. Contains 5 disulfide bonds. In terms of tissue distribution, expressed by the venom gland.

It is found in the secreted. The polypeptide is U7-agatoxin-Ao1a (Agelena orientalis (Funnel-web spider)).